We begin with the raw amino-acid sequence, 202 residues long: MPIGVPKVPFRSPGEEDAIWVDVFNRLYRERLLFLGQEVDSEISNQLVGLMVYLSIEDDTRDLYLFINSPGGWVIPGISIYDTMQFVPPDVHTICMGLAASMGSFILVGGEITKRLAFPHARVMIHQPASSFYEAPTGEFILEAEELLKLRETLTRVYVQRTGNPLWVVSEDMERDVFMSAAEAQAHGIVDLVAVENTGDFA.

Ser-101 (nucleophile) is an active-site residue. Residue His-126 is part of the active site.

It belongs to the peptidase S14 family. As to quaternary structure, component of the chloroplastic Clp protease core complex.

It is found in the plastid. The protein localises to the chloroplast stroma. It catalyses the reaction Hydrolysis of proteins to small peptides in the presence of ATP and magnesium. alpha-casein is the usual test substrate. In the absence of ATP, only oligopeptides shorter than five residues are hydrolyzed (such as succinyl-Leu-Tyr-|-NHMec, and Leu-Tyr-Leu-|-Tyr-Trp, in which cleavage of the -Tyr-|-Leu- and -Tyr-|-Trp bonds also occurs).. Functionally, cleaves peptides in various proteins in a process that requires ATP hydrolysis. Has a chymotrypsin-like activity. Plays a major role in the degradation of misfolded proteins. The polypeptide is ATP-dependent Clp protease proteolytic subunit (Liriodendron tulipifera (Tuliptree)).